The sequence spans 129 residues: Small ribosomal subunit protein uS11 (129 aa).

The protein belongs to the universal ribosomal protein uS11 family. As to quaternary structure, part of the 30S ribosomal subunit. Interacts with proteins S7 and S18. Binds to IF-3.

Functionally, located on the platform of the 30S subunit, it bridges several disparate RNA helices of the 16S rRNA. Forms part of the Shine-Dalgarno cleft in the 70S ribosome. In Rhodopseudomonas palustris (strain BisB5), this protein is Small ribosomal subunit protein uS11.